The chain runs to 205 residues: DUF724 domain-containing protein 4 (205 aa).

The segment at 28–59 (DASGRGKRRRVEQEHHSDLNNETAAPTGGSAG) is disordered. A DUF724 domain is found at 63–189 (VLPFTKTLAS…MADDYSKLKK (127 aa)).

In terms of tissue distribution, expressed in roots, leaves, stems, flowers and siliques.

It localises to the nucleus. Functionally, may be involved in the polar growth of plant cells via transportation of RNAs. This is DUF724 domain-containing protein 4 from Arabidopsis thaliana (Mouse-ear cress).